The following is an 819-amino-acid chain: Probable beta-glucosidase G (819 aa).

Residues 1 to 20 (MTSASQILVWGLLAASGAQA) form the signal peptide. Residues Asn41, Asn59, Asn107, Asn228, and Asn277 are each glycosylated (N-linked (GlcNAc...) asparagine). Asp305 is a catalytic residue. 12 N-linked (GlcNAc...) asparagine glycosylation sites follow: Asn337, Asn344, Asn351, Asn403, Asn500, Asn509, Asn554, Asn567, Asn588, Asn627, Asn683, and Asn719.

The protein belongs to the glycosyl hydrolase 3 family.

It localises to the secreted. The catalysed reaction is Hydrolysis of terminal, non-reducing beta-D-glucosyl residues with release of beta-D-glucose.. The protein operates within glycan metabolism; cellulose degradation. In terms of biological role, beta-glucosidases are one of a number of cellulolytic enzymes involved in the degradation of cellulosic biomass. Catalyzes the last step releasing glucose from the inhibitory cellobiose. This is Probable beta-glucosidase G (bglG) from Emericella nidulans (strain FGSC A4 / ATCC 38163 / CBS 112.46 / NRRL 194 / M139) (Aspergillus nidulans).